A 412-amino-acid polypeptide reads, in one-letter code: Serine hydroxymethyltransferase (412 aa).

(6S)-5,6,7,8-tetrahydrofolate-binding positions include Leu-117 and Gly-121–Leu-123. Lys-226 is modified (N6-(pyridoxal phosphate)lysine). Residues Glu-242 and Ser-350–Phe-352 each bind (6S)-5,6,7,8-tetrahydrofolate.

It belongs to the SHMT family. In terms of assembly, homodimer. Pyridoxal 5'-phosphate is required as a cofactor.

It is found in the cytoplasm. It catalyses the reaction (6R)-5,10-methylene-5,6,7,8-tetrahydrofolate + glycine + H2O = (6S)-5,6,7,8-tetrahydrofolate + L-serine. It participates in one-carbon metabolism; tetrahydrofolate interconversion. Its pathway is amino-acid biosynthesis; glycine biosynthesis; glycine from L-serine: step 1/1. In terms of biological role, catalyzes the reversible interconversion of serine and glycine with tetrahydrofolate (THF) serving as the one-carbon carrier. Also exhibits THF-independent aldolase activity toward beta-hydroxyamino acids, producing glycine and aldehydes, via a retro-aldol mechanism. The protein is Serine hydroxymethyltransferase of Methanosarcina mazei (strain ATCC BAA-159 / DSM 3647 / Goe1 / Go1 / JCM 11833 / OCM 88) (Methanosarcina frisia).